Consider the following 327-residue polypeptide: COP9 signalosome complex subunit 7 (327 aa).

One can recognise a PCI domain in the interval 4-165; that stretch reads VHHRALDALQ…NPPTVNVTSV (162 aa). Disordered regions lie at residues 233–260 and 276–327; these read GGEQ…AGWK and GGSN…GKKS. Over residues 236–255 the composition is skewed to gly residues; it reads QLQGGNPGQGQGQGQGGLGK. Positions 315–327 are enriched in basic residues; that stretch reads GARHSKRFLGKKS.

Belongs to the CSN7/EIF3M family. CSN7 subfamily. In terms of assembly, component of the COP9 signalosome (CSN) complex. As to expression, present in uninduced vegetative hyphae, induced conidiating cultures and in both conidiospores and ascospores.

The protein resides in the cytoplasm. It localises to the nucleus. Functionally, component of the COP9 signalosome (CSN) complex that acts as an regulator of the ubiquitin (Ubl) conjugation pathway by mediating the deneddylation of the cullin subunit of SCF-type E3 ubiquitin-protein ligase complexes. The CSN complex seems to link protein degradation to sexual development. May be required for sporulation only at elevated temperatures. This chain is COP9 signalosome complex subunit 7 (csnG), found in Emericella nidulans (strain FGSC A4 / ATCC 38163 / CBS 112.46 / NRRL 194 / M139) (Aspergillus nidulans).